Consider the following 308-residue polypeptide: uncharacterized protein (308 aa).

The N-terminal stretch at 1–18 is a signal peptide; that stretch reads MKIILLFLAALASFTVHA.

This is an uncharacterized protein from Escherichia coli (strain K12).